A 181-amino-acid polypeptide reads, in one-letter code: Inner membrane-spanning protein YciB (181 aa).

The next 5 membrane-spanning stretches (helical) occupy residues 22–42 (IYTATGALIAATAVQIAILYF), 50–70 (MHLVTFAMVTVFGTLTLAFHD), 72–92 (AFIKWKVTIIYSLFAIALAVS), 118–138 (VTWYWALFFIGCGVLNVYVAF), and 148–168 (FKVFGLTALTLLNTVISVFYI).

It belongs to the YciB family.

Its subcellular location is the cell inner membrane. In terms of biological role, plays a role in cell envelope biogenesis, maintenance of cell envelope integrity and membrane homeostasis. The polypeptide is Inner membrane-spanning protein YciB (Shewanella denitrificans (strain OS217 / ATCC BAA-1090 / DSM 15013)).